The sequence spans 464 residues: Properdin (464 aa).

Positions 1 to 22 (MPAEMQAPQWLLLLLVILPATG) are cleaved as a signal peptide. 7 consecutive TSP type-1 domains span residues 24–72 (DPVL…QACR), 73–130 (SPQW…PCCP), 132–187 (MGGW…KTCP), 189–251 (HGAW…PPCP), 253–309 (AGGW…VPCP), 311–372 (NGEW…HNCI), and 374–457 (KGSW…PVCK). Cystine bridges form between Cys-28/Cys-52, Cys-39/Cys-68, and Cys-53/Cys-71. Trp-79 and Trp-82 each carry a C-linked (Man) tryptophan glycan. 7 disulfides stabilise this stretch: Cys-85–Cys-123, Cys-89–Cys-129, Cys-100–Cys-107, Cys-128–Cys-166, Cys-144–Cys-180, Cys-148–Cys-186, and Cys-159–Cys-170. C-linked (Man) tryptophan glycosylation is found at Trp-135, Trp-138, and Trp-141. Residue Thr-147 is glycosylated (O-linked (Fuc...) threonine). Residues Trp-192, Trp-195, and Trp-198 are each glycosylated (C-linked (Man) tryptophan). Disulfide bonds link Cys-201/Cys-244, Cys-205/Cys-250, and Cys-220/Cys-234. Ser-204 carries O-linked (Fuc...) serine glycosylation. C-linked (Man) tryptophan glycosylation is found at Trp-256 and Trp-259. 3 disulfide bridges follow: Cys-265–Cys-302, Cys-269–Cys-308, and Cys-280–Cys-292. The O-linked (Fuc...) threonine glycan is linked to Thr-268. 2 C-linked (Man) tryptophan glycosylation sites follow: Trp-317 and Trp-320. Intrachain disulfides connect Cys-323-Cys-365, Cys-332-Cys-371, and Cys-345-Cys-355. An interaction with Complement C3 beta chain region spans residues 346-354 (GGRKFNGKP). C-linked (Man) tryptophan glycans are attached at residues Trp-377, Trp-380, and Trp-383. 3 disulfide bridges follow: Cys-386/Cys-450, Cys-390/Cys-456, and Cys-402/Cys-434. Asn-423 carries an N-linked (GlcNAc...) asparagine glycan.

In plasma, properdin exists as dimers, trimers or tetramers in the relative proportions of 26:54:20. Interacts with the pro-C3-convertase enzyme complex (C3b-Bb) comprised of Complement C3 beta chain (C3b) and the Complement factor B Bb fragment (Bb), where it binds (via its TSP type-1 5 domain) with C3b and Bb. This interaction stabilizes the complex and allows it to become the active C3-convertase enzyme complex (C3b-Bb-FP). Interacts with C3b. Interacts with CFB.

It is found in the secreted. In terms of biological role, a positive regulator of the alternate pathway of complement. It binds to and stabilizes the C3- and C5-convertase enzyme complexes. Inhibits CFI-CFH mediated degradation of Inhibits CFI-CFH mediated degradation of Complement C3 beta chain (C3b). This is Properdin (Cfp) from Mus musculus (Mouse).